Here is a 309-residue protein sequence, read N- to C-terminus: Golgi to ER traffic protein 4 homolog (309 aa).

The interval 290–309 (SGGGLASMEVDGPTIEDEMD) is disordered.

This sequence belongs to the GET4 family.

Functionally, may play a role in insertion of tail-anchored proteins into the endoplasmic reticulum membrane. This is Golgi to ER traffic protein 4 homolog from Dictyostelium discoideum (Social amoeba).